Here is a 274-residue protein sequence, read N- to C-terminus: Aliphatic sulfonates import ATP-binding protein SsuB 2 (274 aa).

The ABC transporter domain maps to 21–235; the sequence is VQLRNVVRQF…DSGQAGFQLI (215 aa). 53-60 is a binding site for ATP; that stretch reads GASGSGKT.

This sequence belongs to the ABC transporter superfamily. Aliphatic sulfonates importer (TC 3.A.1.17.2) family. In terms of assembly, the complex is composed of two ATP-binding proteins (SsuB), two transmembrane proteins (SsuC) and a solute-binding protein (SsuA).

The protein resides in the cell inner membrane. The enzyme catalyses ATP + H2O + aliphatic sulfonate-[sulfonate-binding protein]Side 1 = ADP + phosphate + aliphatic sulfonateSide 2 + [sulfonate-binding protein]Side 1.. Part of the ABC transporter complex SsuABC involved in aliphatic sulfonates import. Responsible for energy coupling to the transport system. This chain is Aliphatic sulfonates import ATP-binding protein SsuB 2, found in Pseudomonas syringae pv. syringae (strain B728a).